The sequence spans 405 residues: Tryptophan synthase beta chain (405 aa).

Position 95 is an N6-(pyridoxal phosphate)lysine (K95).

Belongs to the TrpB family. As to quaternary structure, tetramer of two alpha and two beta chains. It depends on pyridoxal 5'-phosphate as a cofactor.

It carries out the reaction (1S,2R)-1-C-(indol-3-yl)glycerol 3-phosphate + L-serine = D-glyceraldehyde 3-phosphate + L-tryptophan + H2O. It functions in the pathway amino-acid biosynthesis; L-tryptophan biosynthesis; L-tryptophan from chorismate: step 5/5. The beta subunit is responsible for the synthesis of L-tryptophan from indole and L-serine. The sequence is that of Tryptophan synthase beta chain from Pseudomonas putida (strain ATCC 47054 / DSM 6125 / CFBP 8728 / NCIMB 11950 / KT2440).